Here is a 237-residue protein sequence, read N- to C-terminus: Probable transcriptional regulatory protein Mfl546 (237 aa).

Positions 1–20 (MGRAHEVRAASMAKTAAKKS) are disordered. The span at 9–20 (AASMAKTAAKKS) shows a compositional bias: low complexity.

It belongs to the TACO1 family.

It is found in the cytoplasm. This is Probable transcriptional regulatory protein Mfl546 from Mesoplasma florum (strain ATCC 33453 / NBRC 100688 / NCTC 11704 / L1) (Acholeplasma florum).